Here is a 512-residue protein sequence, read N- to C-terminus: Maturase K (512 aa).

It belongs to the intron maturase 2 family. MatK subfamily.

The protein localises to the plastid. It localises to the chloroplast. In terms of biological role, usually encoded in the trnK tRNA gene intron. Probably assists in splicing its own and other chloroplast group II introns. The sequence is that of Maturase K from Lilium longiflorum (Trumpet lily).